Consider the following 800-residue polypeptide: Small ribosomal subunit protein uS3c (800 aa).

The S3-like 1st part stretch occupies residues 1–118; sequence MGQKVHPSGF…LQVKKDILVK (118 aa). The tract at residues 119-664 is intervening sequence (IVS); sequence LQKTRQYLTN…FLDCKFEELE (546 aa). The S3-like 2nd part stretch occupies residues 665–800; that stretch reads RRKTMWVQNL…TKLVTESTGA (136 aa).

Belongs to the universal ribosomal protein uS3 family. As to quaternary structure, part of the 30S ribosomal subunit.

Its subcellular location is the plastid. The protein resides in the chloroplast. This is Small ribosomal subunit protein uS3c (rps3) from Chlamydomonas moewusii (Chlamydomonas eugametos).